Here is a 307-residue protein sequence, read N- to C-terminus: Homoserine kinase (307 aa).

Residue 85–95 (PLTRGLGSSAA) coordinates ATP.

It belongs to the GHMP kinase family. Homoserine kinase subfamily.

It is found in the cytoplasm. It carries out the reaction L-homoserine + ATP = O-phospho-L-homoserine + ADP + H(+). The protein operates within amino-acid biosynthesis; L-threonine biosynthesis; L-threonine from L-aspartate: step 4/5. Functionally, catalyzes the ATP-dependent phosphorylation of L-homoserine to L-homoserine phosphate. In Caldicellulosiruptor bescii (strain ATCC BAA-1888 / DSM 6725 / KCTC 15123 / Z-1320) (Anaerocellum thermophilum), this protein is Homoserine kinase.